Consider the following 616-residue polypeptide: tRNA uridine 5-carboxymethylaminomethyl modification enzyme MnmG (616 aa).

Residues 10–15, Val122, and Ser177 contribute to the FAD site; that span reads GAGHAG. 271 to 285 serves as a coordination point for NAD(+); sequence GPRYCPSIEDKVVRF. Residue Gln368 participates in FAD binding.

Belongs to the MnmG family. As to quaternary structure, homodimer. Heterotetramer of two MnmE and two MnmG subunits. It depends on FAD as a cofactor.

The protein resides in the cytoplasm. NAD-binding protein involved in the addition of a carboxymethylaminomethyl (cmnm) group at the wobble position (U34) of certain tRNAs, forming tRNA-cmnm(5)s(2)U34. This Malacoplasma penetrans (strain HF-2) (Mycoplasma penetrans) protein is tRNA uridine 5-carboxymethylaminomethyl modification enzyme MnmG.